A 77-amino-acid polypeptide reads, in one-letter code: RNA-binding protein Hfq (77 aa).

Positions 10-70 constitute a Sm domain; the sequence is DIFLNSARKN…ITTVTPEKPI (61 aa).

It belongs to the Hfq family. Homohexamer.

Its function is as follows. RNA chaperone that binds small regulatory RNA (sRNAs) and mRNAs to facilitate mRNA translational regulation in response to envelope stress, environmental stress and changes in metabolite concentrations. Also binds with high specificity to tRNAs. The chain is RNA-binding protein Hfq from Clostridium botulinum (strain Eklund 17B / Type B).